A 132-amino-acid chain; its full sequence is Small ribosomal subunit protein uS8 (132 aa).

Belongs to the universal ribosomal protein uS8 family. Part of the 30S ribosomal subunit. Contacts proteins S5 and S12.

In terms of biological role, one of the primary rRNA binding proteins, it binds directly to 16S rRNA central domain where it helps coordinate assembly of the platform of the 30S subunit. The polypeptide is Small ribosomal subunit protein uS8 (Macrococcus caseolyticus (strain JCSC5402) (Macrococcoides caseolyticum)).